A 206-amino-acid polypeptide reads, in one-letter code: Protein GrpE (206 aa).

Over residues 1 to 18 (MNNEDKKLQDEQLQKETV) the composition is skewed to basic and acidic residues. Residues 1 to 21 (MNNEDKKLQDEQLQKETVEAA) form a disordered region.

Belongs to the GrpE family. As to quaternary structure, homodimer.

The protein localises to the cytoplasm. Participates actively in the response to hyperosmotic and heat shock by preventing the aggregation of stress-denatured proteins, in association with DnaK and GrpE. It is the nucleotide exchange factor for DnaK and may function as a thermosensor. Unfolded proteins bind initially to DnaJ; upon interaction with the DnaJ-bound protein, DnaK hydrolyzes its bound ATP, resulting in the formation of a stable complex. GrpE releases ADP from DnaK; ATP binding to DnaK triggers the release of the substrate protein, thus completing the reaction cycle. Several rounds of ATP-dependent interactions between DnaJ, DnaK and GrpE are required for fully efficient folding. The polypeptide is Protein GrpE (Photobacterium profundum (strain SS9)).